Here is an 869-residue protein sequence, read N- to C-terminus: Protein translocase subunit SecA (869 aa).

Residues Q85, 103–107 (GEGKT), and D508 each bind ATP.

Belongs to the SecA family. In terms of assembly, monomer and homodimer. Part of the essential Sec protein translocation apparatus which comprises SecA, SecYEG and auxiliary proteins SecDF. Other proteins may also be involved.

The protein resides in the cell membrane. It localises to the cytoplasm. The catalysed reaction is ATP + H2O + cellular proteinSide 1 = ADP + phosphate + cellular proteinSide 2.. In terms of biological role, part of the Sec protein translocase complex. Interacts with the SecYEG preprotein conducting channel. Has a central role in coupling the hydrolysis of ATP to the transfer of proteins into and across the cell membrane, serving as an ATP-driven molecular motor driving the stepwise translocation of polypeptide chains across the membrane. The polypeptide is Protein translocase subunit SecA (Deinococcus geothermalis (strain DSM 11300 / CIP 105573 / AG-3a)).